The chain runs to 329 residues: Prostaglandin reductase 1 (329 aa).

Thr-18 carries the phosphothreonine modification. NADP(+)-binding positions include 152-155 (GAVG), Lys-178, Tyr-193, Asn-217, 239-245 (CGAISQY), 270-272 (FIV), and Asn-321. Residue Lys-178 is modified to N6-(2-hydroxyisobutyryl)lysine; alternate. Lys-178 carries the post-translational modification N6-acetyllysine; alternate.

The protein belongs to the NADP-dependent oxidoreductase L4BD family. Monomer or homodimer.

It is found in the cytoplasm. The catalysed reaction is 13,14-dihydro-15-oxo-prostaglandin E1 + NADP(+) = 15-oxoprostaglandin E1 + NADPH + H(+). It catalyses the reaction 13,14-dihydro-15-oxo-prostaglandin E2 + NADP(+) = 15-oxoprostaglandin E2 + NADPH + H(+). It carries out the reaction 13,14-dihydro-15-oxo-prostaglandin F1alpha + NADP(+) = 15-oxoprostaglandin F1alpha + NADPH + H(+). The enzyme catalyses 13,14-dihydro-15-oxo-PGF2alpha + NADP(+) = 15-oxoprostaglandin F2alpha + NADPH + H(+). The catalysed reaction is leukotriene B4 + NADP(+) = 12-oxo-leukotriene B4 + NADPH + H(+). It catalyses the reaction 20-hydroxy-leukotriene B4 + NADP(+) = 12-oxo-20-hydroxy-leukotriene B4 + NADPH + H(+). It carries out the reaction 6-trans-leukotriene B4 + NADP(+) = 12-oxo-(5S)-hydroxy-(6E,8E,10E,14Z)-eicosatetraenoate + NADPH + H(+). The enzyme catalyses (5S,12S)-dihydroxy-(6E,10E,12E,14Z)-eicosatetraenoate + NADP(+) = 12-oxo-(5S)-hydroxy-(6E,8E,10E,14Z)-eicosatetraenoate + NADPH + H(+). The catalysed reaction is an n-alkanal + NADP(+) = an alk-2-enal + NADPH + H(+). It catalyses the reaction hexanal + NADP(+) = (E)-hex-2-enal + NADPH + H(+). It carries out the reaction octanal + NADP(+) = (2E)-octenal + NADPH + H(+). The enzyme catalyses decanal + NADP(+) = (2E)-decenal + NADPH + H(+). The catalysed reaction is dodecanal + NADP(+) = (2E)-dodecenal + NADPH + H(+). It catalyses the reaction 4-hydroxynonanal + NADP(+) = (E)-4-hydroxynon-2-enal + NADPH + H(+). It carries out the reaction pentan-2-one + NADP(+) = (E)-pent-3-en-2-one + NADPH + H(+). The enzyme catalyses nonan-2-one + NADP(+) = (3E)-nonen-2-one + NADPH + H(+). NAD(P)H-dependent oxidoreductase involved in metabolic inactivation of pro- and anti-inflammatory eicosanoids: prostaglandins (PG), leukotrienes (LT) and lipoxins (LX). Catalyzes with high efficiency the reduction of the 13,14 double bond of 15-oxoPGs, including 15-oxo-PGE1, 15-oxo-PGE2, 15-oxo-PGF1-alpha and 15-oxo-PGF2-alpha. Catalyzes with lower efficiency the oxidation of the hydroxyl group at C12 of LTB4 and its derivatives, converting them into biologically less active 12-oxo-LTB4 metabolites. Reduces 15-oxo-LXA4 to 13,14 dihydro-15-oxo-LXA4, enhancing neutrophil recruitment at the inflammatory site. Plays a role in metabolic detoxification of alkenals and ketones. Reduces alpha,beta-unsaturated alkenals and ketones, particularly those with medium-chain length, showing highest affinity toward (2E)-decenal and (3E)-3-nonen-2-one. May inactivate 4-hydroxy-2-nonenal, a cytotoxic lipid constituent of oxidized low-density lipoprotein particles. This Mus musculus (Mouse) protein is Prostaglandin reductase 1 (Ptgr1).